A 211-amino-acid chain; its full sequence is Regulator of G-protein signaling 2 (211 aa).

Disordered stretches follow at residues 14–33 (RPMD…REKM) and 49–68 (LQNS…KQQA). Positions 32 to 66 (KMKRTLLKDWKTRLSYFLQNSSTPGKPKTGKKSKQ) are necessary for membrane association. The interval 79–116 (LWSEAFDELLASKYGLAAFRAFLKSEFCEENIEFWLAC) is necessary to inhibit protein synthesis. Positions 83-199 (AFDELLASKY…LESEFYQDLC (117 aa)) constitute an RGS domain.

In terms of assembly, interacts with GNAQ. Does not interact with GNAI1 and GNAI3. Interacts with EIF2B5. Interacts with PRKG1 (isoform alpha). Post-translationally, phosphorylated by protein kinase C. Phosphorylation by PRKG1 leads to activation of RGS2 activity. Expressed in acute myelogenous leukemia (AML) and in acute lymphoblastic leukemia (ALL).

It localises to the cell membrane. The protein localises to the cytoplasm. The protein resides in the nucleus. Its subcellular location is the nucleolus. It is found in the mitochondrion. In terms of biological role, regulates G protein-coupled receptor signaling cascades. Inhibits signal transduction by increasing the GTPase activity of G protein alpha subunits, thereby driving them into their inactive GDP-bound form. It is involved in the negative regulation of the angiotensin-activated signaling pathway. Plays a role in the regulation of blood pressure in response to signaling via G protein-coupled receptors and GNAQ. Plays a role in regulating the constriction and relaxation of vascular smooth muscle. Binds EIF2B5 and blocks its activity, thereby inhibiting the translation of mRNA into protein. This chain is Regulator of G-protein signaling 2 (RGS2), found in Homo sapiens (Human).